A 177-amino-acid chain; its full sequence is ATP synthase subunit delta (177 aa).

It belongs to the ATPase delta chain family. In terms of assembly, F-type ATPases have 2 components, F(1) - the catalytic core - and F(0) - the membrane proton channel. F(1) has five subunits: alpha(3), beta(3), gamma(1), delta(1), epsilon(1). F(0) has three main subunits: a(1), b(2) and c(10-14). The alpha and beta chains form an alternating ring which encloses part of the gamma chain. F(1) is attached to F(0) by a central stalk formed by the gamma and epsilon chains, while a peripheral stalk is formed by the delta and b chains.

The protein resides in the cell inner membrane. Its function is as follows. F(1)F(0) ATP synthase produces ATP from ADP in the presence of a proton or sodium gradient. F-type ATPases consist of two structural domains, F(1) containing the extramembraneous catalytic core and F(0) containing the membrane proton channel, linked together by a central stalk and a peripheral stalk. During catalysis, ATP synthesis in the catalytic domain of F(1) is coupled via a rotary mechanism of the central stalk subunits to proton translocation. Functionally, this protein is part of the stalk that links CF(0) to CF(1). It either transmits conformational changes from CF(0) to CF(1) or is implicated in proton conduction. This Azobacteroides pseudotrichonymphae genomovar. CFP2 protein is ATP synthase subunit delta.